Consider the following 382-residue polypeptide: Norsolorinic acid reductase B (382 aa).

NADP(+) is bound at residue Asp-64. The active-site Proton donor is the Tyr-69. His-143 serves as a coordination point for substrate. NADP(+) contacts are provided by residues Ser-173 to Asp-174, Gln-199, Gly-228 to Glu-238, and Arg-302 to Val-310.

This sequence belongs to the aldo/keto reductase family. Aldo/keto reductase 2 subfamily.

The protein operates within mycotoxin biosynthesis; aflatoxin biosynthesis. Its function is as follows. Norsolorinic acid reductase; part of the gene cluster that mediates the biosynthesis of aflatoxins, a group of polyketide-derived furanocoumarins, and part of the most toxic and carcinogenic compounds among the known mycotoxins. The four major aflatoxins produced by A.parasiticus are aflatoxin B1 (AFB1), aflatoxin B2 (AFB2), aflatoxin G1 (AFG1) and aflatoxin G2 (AFG2). Within the aflatoxin pathway, the norsolorinic acid reductase aflE may play a role in the conversion of norsolorinic acid (NOR) to averantin (AVN). The biosynthesis of aflatoxins begins with the norsolorinic acid synthase aflC that combines a hexanoyl starter unit produced by the fatty acid synthase aflA/aflB and 7 malonyl-CoA extender units to synthesize the precursor NOR. The second step is the conversion of NOR to averantin and requires the norsolorinic acid ketoreductase aflD, which catalyzes the dehydration of norsolorinic acid to form (1'S)-averantin. The norsolorinic acid reductases aflE and aflF may also play a role in the conversion of NOR to AVN. The cytochrome P450 monooxygenase aflG then catalyzes the hydroxylation of AVN to 5'hydroxyaverantin (HAVN). The next step is performed by the 5'-hydroxyaverantin dehydrogenase aflH that transforms HAVN to 5'-oxoaverantin (OAVN) which is further converted to averufin (AVF) by aflK that plays a dual role in the pathway, as a 5'-oxoaverantin cyclase that mediates conversion of 5'-oxoaverantin, as well as a versicolorin B synthase in a later step in the pathway. The averufin oxidase aflI catalyzes the conversion of AVF to versiconal hemiacetal acetate (VHA). VHA is then the substrate for the versiconal hemiacetal acetate esterase aflJ to yield versiconal (VAL). Versicolorin B synthase aflK then converts VAL to versicolorin B (VERB) by closing the bisfuran ring of aflatoxin which is required for DNA-binding, thus giving to aflatoxin its activity as a mutagen. Then, the activity of the versicolorin B desaturase aflL leads to versicolorin A (VERA). A branch point starts from VERB since it can also be converted to dihydrodemethylsterigmatocystin (DMDHST), probably also by aflL, VERA being a precursor for aflatoxins B1 and G1, and DMDHST for aflatoxins B2 and G2. Next, the versicolorin reductase aflM and the cytochrome P450 monooxygenase aflN are involved in conversion of VERA to demethylsterigmatocystin (DMST). AflX and aflY seem also involved in this step, through probable aflX-mediated epoxide ring-opening step following versicolorin A oxidation and aflY-mediated Baeyer-Villiger oxidation required for the formation of the xanthone ring. The methyltransferase aflO then leads to the modification of DMST to sterigmatocystin (ST), and of DMDHST to dihydrosterigmatocystin (DHST). Both ST and DHST are then substrates of the O-methyltransferase aflP to yield O-methylsterigmatocystin (OMST) and dihydro-O-methylsterigmatocystin (DHOMST), respectively. Finally OMST is converted to aflatoxins B1 and G1, and DHOMST to aflatoxins B2 and G2, via the action of several enzymes including O-methylsterigmatocystin oxidoreductase aflQ, the cytochrome P450 monooxygenase aflU, but also the NADH-dependent flavin oxidoreductase nadA which is specifically required for the synthesis of AFG1. The polypeptide is Norsolorinic acid reductase B (Aspergillus parasiticus (strain ATCC 56775 / NRRL 5862 / SRRC 143 / SU-1)).